Here is a 285-residue protein sequence, read N- to C-terminus: Probable endonuclease 4 (285 aa).

Zn(2+) contacts are provided by H69, H109, E145, D179, H182, H216, D229, H231, and E261.

The protein belongs to the AP endonuclease 2 family. Zn(2+) serves as cofactor.

It catalyses the reaction Endonucleolytic cleavage to 5'-phosphooligonucleotide end-products.. In terms of biological role, endonuclease IV plays a role in DNA repair. It cleaves phosphodiester bonds at apurinic or apyrimidinic (AP) sites, generating a 3'-hydroxyl group and a 5'-terminal sugar phosphate. The chain is Probable endonuclease 4 from Salmonella schwarzengrund (strain CVM19633).